The following is a 116-amino-acid chain: Antimicrobial peptide 1b (116 aa).

Positions 1–34 are cleaved as a signal peptide; it reads MKPHMSATVLRAPRVAAILLAVVLAAVLATAVNG. The region spanning 35–77 is the Chitin-binding type-1 domain; sequence AQRCGDQARGAKCPNCLCCGKYGFCGSGDAYCGAGSCQSQCRG. Disulfide bonds link Cys-38/Cys-53, Cys-47/Cys-59, Cys-50/Cys-78, Cys-52/Cys-66, and Cys-71/Cys-75. A propeptide spanning residues 80–116 is cleaved from the precursor; it reads DDVVGQALPAEPGSTRATAASSASARGLNLTATTGGP. The segment at 89–116 is disordered; the sequence is AEPGSTRATAASSASARGLNLTATTGGP. A compositionally biased stretch (low complexity) spans 93 to 105; sequence STRATAASSASAR.

In terms of biological role, binds chitin. Has antifungal activity against the fungi F.solani (IC(50)=5 ug/ml), F.verticillioides (IC(50)=30 ug/ml), F.oxysporum (IC(50)=5 ug/ml), B.sorokiniana (IC(50)=5 ug/ml), B.cinerea (IC(50)=20 ug/ml) and N.crassa (IC(50)=10 ug/ml). Inhibits hyphal elongation and causes browning of hyphae in F.oxysporum. Causes destruction and discoloration of spores in B.sorokiniana. Inhibits the development of disease caused by the fungus P.infestans on potato tubers. Has antibacterial activity against the Gram-negative bacteria P.syringae and E.carotovora, and the Gram-positive bacterium C.michiganensis. Its function is as follows. Has antifungal activity against F.verticillioides (IC(50)=2.7 ug/ml). At concentrations between 45 uM and 225 uM, inhibits activity of metalloproteinase fungalysin Fv-cpm from F.verticillioides. The sequence is that of Antimicrobial peptide 1b from Triticum kiharae (Wheat).